The following is a 640-amino-acid chain: Threonine--tRNA ligase (640 aa).

The TGS domain occupies M1–T61. The tract at residues D242–P533 is catalytic. 3 residues coordinate Zn(2+): C333, H384, and H510.

Belongs to the class-II aminoacyl-tRNA synthetase family. In terms of assembly, homodimer. It depends on Zn(2+) as a cofactor.

The protein localises to the cytoplasm. The enzyme catalyses tRNA(Thr) + L-threonine + ATP = L-threonyl-tRNA(Thr) + AMP + diphosphate + H(+). Its function is as follows. Catalyzes the attachment of threonine to tRNA(Thr) in a two-step reaction: L-threonine is first activated by ATP to form Thr-AMP and then transferred to the acceptor end of tRNA(Thr). Also edits incorrectly charged L-seryl-tRNA(Thr). This Prochlorococcus marinus (strain NATL1A) protein is Threonine--tRNA ligase.